Here is a 282-residue protein sequence, read N- to C-terminus: Acetylglutamate kinase (282 aa).

Substrate-binding positions include 62-63 (GG), R84, and N178.

Belongs to the acetylglutamate kinase family. ArgB subfamily.

It is found in the cytoplasm. The enzyme catalyses N-acetyl-L-glutamate + ATP = N-acetyl-L-glutamyl 5-phosphate + ADP. The protein operates within amino-acid biosynthesis; L-arginine biosynthesis; N(2)-acetyl-L-ornithine from L-glutamate: step 2/4. Functionally, catalyzes the ATP-dependent phosphorylation of N-acetyl-L-glutamate. This Thermotoga petrophila (strain ATCC BAA-488 / DSM 13995 / JCM 10881 / RKU-1) protein is Acetylglutamate kinase.